The chain runs to 386 residues: Lipoyl synthase, mitochondrial (386 aa).

Residues 1–21 (MISRNSILLRRLYPTTIIRTL) constitute a mitochondrion transit peptide. Cys107, Cys112, Cys118, Cys137, Cys141, Cys144, and Ser352 together coordinate [4Fe-4S] cluster. The Radical SAM core domain occupies 122-341 (KKSEATATIM…RDTALDMGFL (220 aa)).

The protein belongs to the radical SAM superfamily. Lipoyl synthase family. [4Fe-4S] cluster serves as cofactor.

Its subcellular location is the mitochondrion. The catalysed reaction is [[Fe-S] cluster scaffold protein carrying a second [4Fe-4S](2+) cluster] + N(6)-octanoyl-L-lysyl-[protein] + 2 oxidized [2Fe-2S]-[ferredoxin] + 2 S-adenosyl-L-methionine + 4 H(+) = [[Fe-S] cluster scaffold protein] + N(6)-[(R)-dihydrolipoyl]-L-lysyl-[protein] + 4 Fe(3+) + 2 hydrogen sulfide + 2 5'-deoxyadenosine + 2 L-methionine + 2 reduced [2Fe-2S]-[ferredoxin]. Its pathway is protein modification; protein lipoylation via endogenous pathway; protein N(6)-(lipoyl)lysine from octanoyl-[acyl-carrier-protein]: step 2/2. Its function is as follows. Catalyzes the radical-mediated insertion of two sulfur atoms into the C-6 and C-8 positions of the octanoyl moiety bound to the lipoyl domains of lipoate-dependent enzymes, thereby converting the octanoylated domains into lipoylated derivatives. This is Lipoyl synthase, mitochondrial (LAB5) from Candida albicans (strain SC5314 / ATCC MYA-2876) (Yeast).